Reading from the N-terminus, the 432-residue chain is DNA damage-binding protein 2 (432 aa).

A disordered region spans residues 1–31 (MAPKKCPETQKSPDVAVLLRSKSRRGPQELE). 2 positions are modified to N6-acetyllysine: lysine 35 and lysine 77. Required for interaction with DDB1 stretches follow at residues 68–79 (SIVRDLYQHKLG) and 87–98 (QQGLQKSFLHSL). WD repeat units follow at residues 116 to 151 (SLAWHPTHPSTLAVGSKGGDIMIWNFGIKDKPIFLK), 159 to 194 (ITGLKFNHLNTNQFFASSMEGTTRLQDFKGNILRVY), 203 to 238 (WFCSLDVSAKSRVVVTGDNMGHVILLSTDGKELWNL), 244 to 287 (KVAH…SLPH), and 290 to 329 (PVNAACFSPDGARLLTTDQNNEIRVYSASQWDSPLNLISH). Positions 256–274 (WLLATASIDQTVKIWDLRQ) match the DWD box motif. The tract at residues 334-336 (FQH) is photolesion recognition. WD repeat units lie at residues 343 to 386 (TWHS…MCQL) and 396 to 420 (SLNEFNPMGDTLASTMGYHILIWSQ).

It belongs to the WD repeat DDB2/WDR76 family. In terms of assembly, component of the UV-DDB complex which includes DDB1 and DDB2. The UV-DDB complex interacts with monoubiquitinated histone H2A and binds to XPC via the DDB2 subunit. Component of the DCX (DDB1-CUL4-X-box) E3 ubiquitin-protein ligase complex DDB1-CUL4-ROC1 (also known as CUL4-DDB-ROC1 and CUL4-DDB-RBX1), which includes CUL4A or CUL4B, DDB1, DDB2 and RBX1. DDB2 may function as the substrate recognition module within this complex. The DDB1-CUL4-ROC1 complex may associate with the COP9 signalosome, and this inhibits the E3 ubiquitin-protein ligase activity of the complex. A large number of other DCX complexes may also exist in which an alternate substrate targeting subunit replaces DDB2. These targeting subunits are generally known as DCAF (DDB1- and CUL4-associated factor) or CDW (CUL4-DDB1-associated WD40-repeat) proteins. Phosphorylation by ABL1 negatively regulate UV-DDB activity. Post-translationally, ubiquitinated by CUL4A in response to UV irradiation. Ubiquitination appears to both impair DNA-binding and promotes ubiquitin-dependent proteolysis. Degradation of DDB2 at sites of DNA damage may be a prerequisite for their recognition by XPC and subsequent repair. CUL4A-mediated degradation appears to be promoted by ABL1. In terms of processing, ubiquitinated, leading to proteasomal degradation, and deubiquitinated by USP24. Deubiquitinated by USP44; leading to its stabilization on DNA lesions. Acetylated. Deacetylation by SIRT6 in response to UV stress facilitates nucleotide excision repair pathway (the NER pathway) transduction. In terms of tissue distribution, expressed in bone marrow, liver, lung, muscle, pancreas and spleen.

It localises to the nucleus. It is found in the chromosome. It participates in protein modification; protein ubiquitination. Functionally, protein, which is both involved in DNA repair and protein ubiquitination, as part of the UV-DDB complex and DCX (DDB1-CUL4-X-box) complexes, respectively. Core component of the UV-DDB complex (UV-damaged DNA-binding protein complex), a complex that recognizes UV-induced DNA damage and recruit proteins of the nucleotide excision repair pathway (the NER pathway) to initiate DNA repair. The UV-DDB complex preferentially binds to cyclobutane pyrimidine dimers (CPD), 6-4 photoproducts (6-4 PP), apurinic sites and short mismatches. Also functions as the substrate recognition module for the DCX (DDB2-CUL4-X-box) E3 ubiquitin-protein ligase complex DDB2-CUL4-ROC1 (also known as CUL4-DDB-ROC1 and CUL4-DDB-RBX1). The DDB2-CUL4-ROC1 complex may ubiquitinate histone H2A, histone H3 and histone H4 at sites of UV-induced DNA damage. The ubiquitination of histones may facilitate their removal from the nucleosome and promote subsequent DNA repair. The DDB2-CUL4-ROC1 complex also ubiquitinates XPC, which may enhance DNA-binding by XPC and promote NER. The DDB2-CUL4-ROC1 complex also ubiquitinates KAT7/HBO1 in response to DNA damage, leading to its degradation: recognizes KAT7/HBO1 following phosphorylation by ATR. The sequence is that of DNA damage-binding protein 2 (Ddb2) from Mus musculus (Mouse).